The primary structure comprises 170 residues: Acireductone dioxygenase (170 aa).

Fe(2+) is bound by residues histidine 99, histidine 101, glutamate 105, and histidine 144. Histidine 99, histidine 101, glutamate 105, and histidine 144 together coordinate Ni(2+).

This sequence belongs to the acireductone dioxygenase (ARD) family. As to quaternary structure, monomer. Requires Fe(2+) as cofactor. Ni(2+) serves as cofactor.

It catalyses the reaction 1,2-dihydroxy-5-(methylsulfanyl)pent-1-en-3-one + O2 = 3-(methylsulfanyl)propanoate + CO + formate + 2 H(+). The catalysed reaction is 1,2-dihydroxy-5-(methylsulfanyl)pent-1-en-3-one + O2 = 4-methylsulfanyl-2-oxobutanoate + formate + 2 H(+). It participates in amino-acid biosynthesis; L-methionine biosynthesis via salvage pathway; L-methionine from S-methyl-5-thio-alpha-D-ribose 1-phosphate: step 5/6. Catalyzes 2 different reactions between oxygen and the acireductone 1,2-dihydroxy-3-keto-5-methylthiopentene (DHK-MTPene) depending upon the metal bound in the active site. Fe-containing acireductone dioxygenase (Fe-ARD) produces formate and 2-keto-4-methylthiobutyrate (KMTB), the alpha-ketoacid precursor of methionine in the methionine recycle pathway. Ni-containing acireductone dioxygenase (Ni-ARD) produces methylthiopropionate, carbon monoxide and formate, and does not lie on the methionine recycle pathway. The polypeptide is Acireductone dioxygenase (Bacillus thuringiensis subsp. konkukian (strain 97-27)).